We begin with the raw amino-acid sequence, 466 residues long: 3-isopropylmalate dehydratase large subunit (466 aa).

[4Fe-4S] cluster contacts are provided by cysteine 347, cysteine 407, and cysteine 410.

Belongs to the aconitase/IPM isomerase family. LeuC type 1 subfamily. As to quaternary structure, heterodimer of LeuC and LeuD. [4Fe-4S] cluster is required as a cofactor.

The enzyme catalyses (2R,3S)-3-isopropylmalate = (2S)-2-isopropylmalate. It participates in amino-acid biosynthesis; L-leucine biosynthesis; L-leucine from 3-methyl-2-oxobutanoate: step 2/4. Its function is as follows. Catalyzes the isomerization between 2-isopropylmalate and 3-isopropylmalate, via the formation of 2-isopropylmaleate. In Pectobacterium carotovorum subsp. carotovorum (strain PC1), this protein is 3-isopropylmalate dehydratase large subunit.